Consider the following 101-residue polypeptide: MSDSEVNQEAKPEVKPEVKPETHINLKVSDGSSEIFFKIKKTTPLRRLMEAFAKRQGKEMDSLRFLYDGIRIQADQTPEDLDMEDNDIIEAHREQIGGATY.

Ser-2 carries the post-translational modification N-acetylserine. A phosphoserine mark is found at Ser-2 and Ser-4. The 77-residue stretch at 22–98 folds into the Ubiquitin-like domain; that stretch reads THINLKVSDG…IEAHREQIGG (77 aa). Gly-98 participates in a covalent cross-link: Glycyl lysine isopeptide (Gly-Lys) (interchain with K-? in acceptor proteins). Positions 99-101 are excised as a propeptide; that stretch reads ATY.

It belongs to the ubiquitin family. SUMO subfamily. Activated by a E1 ligase composed of AOS1 and UBA2.

In terms of biological role, not known; suppressor of MIF2 mutations. The sequence is that of Ubiquitin-like protein SMT3 (SMT3) from Saccharomyces cerevisiae (strain ATCC 204508 / S288c) (Baker's yeast).